Reading from the N-terminus, the 523-residue chain is GMP synthase [glutamine-hydrolyzing] (523 aa).

Positions Lys-8 to Asn-205 constitute a Glutamine amidotransferase type-1 domain. Cys-85 (nucleophile) is an active-site residue. Residues His-179 and Glu-181 contribute to the active site. A GMPS ATP-PPase domain is found at Trp-206–Arg-398. Residue Ser-233 to Ser-239 coordinates ATP.

As to quaternary structure, homodimer.

It carries out the reaction XMP + L-glutamine + ATP + H2O = GMP + L-glutamate + AMP + diphosphate + 2 H(+). It participates in purine metabolism; GMP biosynthesis; GMP from XMP (L-Gln route): step 1/1. Catalyzes the synthesis of GMP from XMP. In Pasteurella multocida (strain Pm70), this protein is GMP synthase [glutamine-hydrolyzing].